The chain runs to 61 residues: uncharacterized protein (61 aa).

This is an uncharacterized protein from Staphylococcus epidermidis.